Here is a 407-residue protein sequence, read N- to C-terminus: Type II secretion system protein L (407 aa).

Residues 1 to 257 (MEGSVSEFLT…WLRYWQIWRK (257 aa)) lie on the Cytoplasmic side of the membrane. A helical transmembrane segment spans residues 258–275 (VAIAAGLFVAVSISYSLF). The Periplasmic portion of the chain corresponds to 276 to 407 (QAHQYEAQAD…VFGVFVVKPK (132 aa)).

Belongs to the GSP L family. In terms of assembly, type II secretion system is composed of four main components: the outer membrane complex, the inner membrane complex, the cytoplasmic secretion ATPase and the periplasm-spanning pseudopilus. Forms homodimers. Interacts with EpsM/GspM. Interacts with EpsE/GspE and EpsF/GspF.

It is found in the cell inner membrane. Functionally, inner membrane component of the type II secretion system required for the energy-dependent secretion of extracellular factors such as proteases and toxins from the periplasm. Plays a role in the complex assembly and recruits EpsM resulting in a stable complex in the inner membrane. Provides thus a link between the energy-providing EpsE protein in the cytoplasm and the rest of the T2SS machinery. The sequence is that of Type II secretion system protein L (epsL) from Vibrio cholerae serotype O1 (strain ATCC 39315 / El Tor Inaba N16961).